The following is a 273-amino-acid chain: Phosphonates import ATP-binding protein PhnC (273 aa).

The region spanning 2–245 (LRIDKLTKRF…VAREIYGADA (244 aa)) is the ABC transporter domain. 34 to 41 (GRSGAGKS) lines the ATP pocket.

Belongs to the ABC transporter superfamily. Phosphonates importer (TC 3.A.1.9.1) family. As to quaternary structure, the complex is composed of two ATP-binding proteins (PhnC), two transmembrane proteins (PhnE) and a solute-binding protein (PhnD).

It is found in the cell inner membrane. It catalyses the reaction phosphonate(out) + ATP + H2O = phosphonate(in) + ADP + phosphate + H(+). Functionally, part of the ABC transporter complex PhnCDE involved in phosphonates import. Responsible for energy coupling to the transport system. This Ruegeria pomeroyi (strain ATCC 700808 / DSM 15171 / DSS-3) (Silicibacter pomeroyi) protein is Phosphonates import ATP-binding protein PhnC.